The primary structure comprises 279 residues: Movement protein (279 aa).

A disordered region spans residues 247-279 (ESEELNVESPPAAIGSSSASRSEAFRPQVVNGL). Residues 254-268 (ESPPAAIGSSSASRS) show a composition bias toward low complexity.

Belongs to the cucumovirus movement protein family.

Its subcellular location is the host cell junction. The protein localises to the host plasmodesma. Its function is as follows. Transports viral genome to neighboring plant cells directly through plasmosdesmata, without any budding. The movement protein allows efficient cell to cell propagation, by bypassing the host cell wall barrier. Acts by forming a tubular structure at the host plasmodesmata, enlarging it enough to allow free passage of virion capsids. This chain is Movement protein, found in Cucumis sativus (Cucumber).